Consider the following 245-residue polypeptide: MSPARGRAACKTCRSRKQKCDGIRPACSRCRSLGLQCTWPTVLKRGPPKGYTKALEARLAETELVLIRLLHATNDEGLLARAFDGDTQKRAHKRFGERNTELKSSVIGEHKMLALMDHWERFPLRTADDVRQWIGEVSKTSMMQGEGTNQSNEKTRGLLRVESSSGNADYQHEDEVQSPAGAGDDMAVGDPYRDDSVDQDSIGQPPQRTESVGNMQPACETHAVQDITTSSRIELPADFKDQFLW.

The zn(2)-C6 fungal-type DNA-binding region spans 10–37 (CKTCRSRKQKCDGIRPACSRCRSLGLQC). The disordered stretch occupies residues 162 to 216 (ESSSGNADYQHEDEVQSPAGAGDDMAVGDPYRDDSVDQDSIGQPPQRTESVGNMQ). The span at 199–214 (QDSIGQPPQRTESVGN) shows a compositional bias: polar residues.

The protein localises to the nucleus. Functionally, transcription factor; part of the gene cluster that mediates the biosynthesis of the mycotoxin fusaproliferin (FUP) that belongs to the class of bicyclic sesterterpenoids. The polypeptide is Transcription factor FUP7 (Fusarium proliferatum (strain ET1) (Orchid endophyte fungus)).